A 625-amino-acid chain; its full sequence is tRNA uridine 5-carboxymethylaminomethyl modification enzyme MnmG (625 aa).

FAD is bound by residues 11 to 16 (GAGHAG), V123, and S178. 271–285 (GPRYCPSIETKIVTF) provides a ligand contact to NAD(+). Q368 serves as a coordination point for FAD.

It belongs to the MnmG family. Homodimer. Heterotetramer of two MnmE and two MnmG subunits. The cofactor is FAD.

The protein localises to the cytoplasm. NAD-binding protein involved in the addition of a carboxymethylaminomethyl (cmnm) group at the wobble position (U34) of certain tRNAs, forming tRNA-cmnm(5)s(2)U34. This Bacteroides fragilis (strain ATCC 25285 / DSM 2151 / CCUG 4856 / JCM 11019 / LMG 10263 / NCTC 9343 / Onslow / VPI 2553 / EN-2) protein is tRNA uridine 5-carboxymethylaminomethyl modification enzyme MnmG.